The chain runs to 394 residues: NAD(P)H-quinone oxidoreductase subunit H (394 aa).

The protein belongs to the complex I 49 kDa subunit family. As to quaternary structure, NDH-1 can be composed of about 15 different subunits; different subcomplexes with different compositions have been identified which probably have different functions.

It is found in the cellular thylakoid membrane. It catalyses the reaction a plastoquinone + NADH + (n+1) H(+)(in) = a plastoquinol + NAD(+) + n H(+)(out). The catalysed reaction is a plastoquinone + NADPH + (n+1) H(+)(in) = a plastoquinol + NADP(+) + n H(+)(out). Its function is as follows. NDH-1 shuttles electrons from an unknown electron donor, via FMN and iron-sulfur (Fe-S) centers, to quinones in the respiratory and/or the photosynthetic chain. The immediate electron acceptor for the enzyme in this species is believed to be plastoquinone. Couples the redox reaction to proton translocation, and thus conserves the redox energy in a proton gradient. Cyanobacterial NDH-1 also plays a role in inorganic carbon-concentration. The sequence is that of NAD(P)H-quinone oxidoreductase subunit H from Synechococcus sp. (strain JA-3-3Ab) (Cyanobacteria bacterium Yellowstone A-Prime).